The chain runs to 586 residues: Isocitrate dehydrogenase kinase/phosphatase (586 aa).

ATP-binding positions include 316–322 (ARGDRGL) and lysine 337. Aspartate 372 is an active-site residue.

This sequence belongs to the AceK family.

The protein resides in the cytoplasm. It catalyses the reaction L-seryl-[isocitrate dehydrogenase] + ATP = O-phospho-L-seryl-[isocitrate dehydrogenase] + ADP + H(+). In terms of biological role, bifunctional enzyme which can phosphorylate or dephosphorylate isocitrate dehydrogenase (IDH) on a specific serine residue. This is a regulatory mechanism which enables bacteria to bypass the Krebs cycle via the glyoxylate shunt in response to the source of carbon. When bacteria are grown on glucose, IDH is fully active and unphosphorylated, but when grown on acetate or ethanol, the activity of IDH declines drastically concomitant with its phosphorylation. This is Isocitrate dehydrogenase kinase/phosphatase from Anaeromyxobacter dehalogenans (strain 2CP-C).